Reading from the N-terminus, the 418-residue chain is Mitochondrial outer membrane protein SLC25A46 (418 aa).

Phosphoserine occurs at positions 32 and 35. The residue at position 45 (T45) is a Phosphothreonine. Residues 46 to 96 (PPDIPGSRNLHWGEKSPSYGVPSAPPTLEGPAEEPFPGGGDGPRPGRSSEQ) form a disordered region. Residues 96 to 187 (QLNRFAGFGI…GIISEFTPLP (92 aa)) form a Solcar 1 repeat. A run of 6 helical transmembrane segments spans residues 103 to 123 (FGIG…CIVL), 167 to 187 (FIVQ…TPLP), 202 to 222 (HLLL…ASLI), 258 to 278 (LLPL…HYII), 314 to 334 (FPEL…LYPL), and 382 to 402 (VFGF…HATI). One copy of the Solcar 2 repeat lies at 311–416 (DAYFPELIAN…KIIYSTLLQN (106 aa)).

Belongs to the mitochondrial carrier (TC 2.A.29) family. As to quaternary structure, associates with the mitochondrial contact site and cristae organizing system (MICOS) complex. May associate with the endoplasmic reticulum membrane protein complex (EMC). As to expression, widely expressed. Highly expressed in hindbrain, spinal cord and brain coronal sections containing corpus callosum, fornix, optic chiasm, thalamus, hypothalamus, midbrain, pons and cerebellum.

Its subcellular location is the mitochondrion outer membrane. In terms of biological role, transmembrane protein of the mitochondrial outer membrane that controls mitochondrial organization. May regulate the assembly of the MICOS (mitochondrial contact site and cristae organizing system) complex which is essential to the biogenesis and dynamics of mitochondrial cristae, the inwards folds of the inner mitochondrial membrane. Through its interaction with the EMC (endoplasmic reticulum membrane protein complex), could regulate mitochondrial lipid homeostasis and thereby mitochondrial fission. This is Mitochondrial outer membrane protein SLC25A46 from Rattus norvegicus (Rat).